We begin with the raw amino-acid sequence, 241 residues long: Chaperone protein HifB (241 aa).

The signal sequence occupies residues 1–27 (MGKTMFKKTLLFFTALFFAALCAFSAN).

Belongs to the periplasmic pilus chaperone family.

The protein localises to the periplasm. Its function is as follows. Mediates assembly of pili by forming soluble multimeric complexes with pili subunits as an intermediate step in the assembly process. This protein is involved in type B pili (HifA) assembly. This is Chaperone protein HifB (hifB) from Haemophilus influenzae.